We begin with the raw amino-acid sequence, 391 residues long: Probable tRNA sulfurtransferase (391 aa).

One can recognise a THUMP domain in the interval 60–167 (DEIIDHIKKV…KDNCYVYTDR (108 aa)). ATP is bound by residues 185-186 (LL), 210-211 (HF), Arg-267, Gly-289, and Gln-298.

Belongs to the ThiI family.

It localises to the cytoplasm. It carries out the reaction [ThiI sulfur-carrier protein]-S-sulfanyl-L-cysteine + a uridine in tRNA + 2 reduced [2Fe-2S]-[ferredoxin] + ATP + H(+) = [ThiI sulfur-carrier protein]-L-cysteine + a 4-thiouridine in tRNA + 2 oxidized [2Fe-2S]-[ferredoxin] + AMP + diphosphate. The enzyme catalyses [ThiS sulfur-carrier protein]-C-terminal Gly-Gly-AMP + S-sulfanyl-L-cysteinyl-[cysteine desulfurase] + AH2 = [ThiS sulfur-carrier protein]-C-terminal-Gly-aminoethanethioate + L-cysteinyl-[cysteine desulfurase] + A + AMP + 2 H(+). Its pathway is cofactor biosynthesis; thiamine diphosphate biosynthesis. Catalyzes the ATP-dependent transfer of a sulfur to tRNA to produce 4-thiouridine in position 8 of tRNAs, which functions as a near-UV photosensor. Also catalyzes the transfer of sulfur to the sulfur carrier protein ThiS, forming ThiS-thiocarboxylate. This is a step in the synthesis of thiazole, in the thiamine biosynthesis pathway. The sulfur is donated as persulfide by IscS. This is Probable tRNA sulfurtransferase from Finegoldia magna (strain ATCC 29328 / DSM 20472 / WAL 2508) (Peptostreptococcus magnus).